A 262-amino-acid chain; its full sequence is MWKLYVAALPANGWNWIAVWRRNYLAWKKVALASILGNLADPLIYLFGLGAGLGMMVGRVDGVSYIAFLSAGMVATSAMTASTFETIYATFARMRAQRTWEAILHTQVTIGDIVLGELAWAATKASLAGTGIGVVAATLGYTEWVSLLYALPVIALTGLAFASLAMIVTALAPSYEYFIFYQTLVITPMLFLSGAVFPVNQLPGAFQHVTRILPLAHSIDVIRPIMLGSPLVHVGLHIGALCCYAVVPFFLSTALLRRRLMP.

The ABC transmembrane type-2 domain occupies 33–259 (ASILGNLADP…FLSTALLRRR (227 aa)). 7 helical membrane-spanning segments follow: residues 35 to 55 (ILGNLADPLIYLFGLGAGLGM), 62 to 82 (GVSYIAFLSAGMVATSAMTAS), 102 to 122 (AILHTQVTIGDIVLGELAWAA), 127 to 147 (LAGTGIGVVAATLGYTEWVSL), 148 to 168 (LYALPVIALTGLAFASLAMIV), 177 to 197 (YFIFYQTLVITPMLFLSGAVF), and 231 to 251 (LVHVGLHIGALCCYAVVPFFL).

This sequence belongs to the ABC-2 integral membrane protein family. Lipooligosaccharide exporter (TC 3.A.1.102) subfamily. In terms of assembly, the complex is composed of two ATP-binding proteins (NodI) and two transmembrane proteins (NodJ).

It localises to the cell inner membrane. Its function is as follows. Part of the ABC transporter complex NodIJ involved in the export of the nodulation factors (Nod factors), the bacterial signal molecules that induce symbiosis and subsequent nodulation induction. Nod factors are LCO (lipo-chitin oligosaccharide), a modified beta-1,4-linked N-acetylglucosamine oligosaccharide. This subunit encodes the transporter. The sequence is that of Nodulation protein J (nodJ) from Rhizobium meliloti (strain 1021) (Ensifer meliloti).